Reading from the N-terminus, the 77-residue chain is Dermaseptin-B9 (77 aa).

Residues 1–22 (MAFLKKSLFLVLFLGLVSLSVC) form the signal peptide. Propeptides lie at residues 23–43 (EEEK…QSEE) and 76–77 (EQ).

This sequence belongs to the frog skin active peptide (FSAP) family. Dermaseptin subfamily. Expressed by the skin glands.

The protein resides in the secreted. In terms of biological role, has antimicrobial activity. Exhibits a bactericidal activity towards several species of mollicutes, firmicutes and gracilicutes. This peptide is membranotropic and it efficiently depolarizes the plasma membrane. This is Dermaseptin-B9 (DRG3) from Phyllomedusa bicolor (Two-colored leaf frog).